A 442-amino-acid chain; its full sequence is ATP-dependent protease ATPase subunit HslU (442 aa).

Residues I18, 60 to 65 (GVGKTE), D255, E320, and R392 each bind ATP.

The protein belongs to the ClpX chaperone family. HslU subfamily. A double ring-shaped homohexamer of HslV is capped on each side by a ring-shaped HslU homohexamer. The assembly of the HslU/HslV complex is dependent on binding of ATP.

The protein localises to the cytoplasm. In terms of biological role, ATPase subunit of a proteasome-like degradation complex; this subunit has chaperone activity. The binding of ATP and its subsequent hydrolysis by HslU are essential for unfolding of protein substrates subsequently hydrolyzed by HslV. HslU recognizes the N-terminal part of its protein substrates and unfolds these before they are guided to HslV for hydrolysis. This Shewanella putrefaciens (strain CN-32 / ATCC BAA-453) protein is ATP-dependent protease ATPase subunit HslU.